The primary structure comprises 191 residues: Ion-translocating oxidoreductase complex subunit B (191 aa).

Residues 1-26 (MSSLWIAIAAVSAIALVSGLILGFAA) are hydrophobic. The 59-residue stretch at 32–90 (EADPIVERIDALLPQSQCGQCGYPGCRPYAEAVANGEKINRCAPGGEAVMRNIAALLAV) folds into the 4Fe-4S domain. [4Fe-4S] cluster is bound by residues Cys49, Cys52, Cys57, Cys73, Cys116, Cys119, Cys122, Cys126, Cys146, Cys149, Cys152, and Cys156. 4Fe-4S ferredoxin-type domains are found at residues 107–136 (QVAL…GATR) and 137–166 (ALHT…LVPV).

The protein belongs to the 4Fe4S bacterial-type ferredoxin family. RnfB subfamily. As to quaternary structure, the complex is composed of six subunits: RnfA, RnfB, RnfC, RnfD, RnfE and RnfG. The cofactor is [4Fe-4S] cluster.

It localises to the cell inner membrane. Its function is as follows. Part of a membrane-bound complex that couples electron transfer with translocation of ions across the membrane. This chain is Ion-translocating oxidoreductase complex subunit B, found in Edwardsiella ictaluri (strain 93-146).